Here is a 295-residue protein sequence, read N- to C-terminus: Bifunctional protein FolD (295 aa).

Residues 167–169 (GRS), Ser192, and Ile233 contribute to the NADP(+) site.

This sequence belongs to the tetrahydrofolate dehydrogenase/cyclohydrolase family. In terms of assembly, homodimer.

The enzyme catalyses (6R)-5,10-methylene-5,6,7,8-tetrahydrofolate + NADP(+) = (6R)-5,10-methenyltetrahydrofolate + NADPH. The catalysed reaction is (6R)-5,10-methenyltetrahydrofolate + H2O = (6R)-10-formyltetrahydrofolate + H(+). It functions in the pathway one-carbon metabolism; tetrahydrofolate interconversion. Its function is as follows. Catalyzes the oxidation of 5,10-methylenetetrahydrofolate to 5,10-methenyltetrahydrofolate and then the hydrolysis of 5,10-methenyltetrahydrofolate to 10-formyltetrahydrofolate. The polypeptide is Bifunctional protein FolD (Paramagnetospirillum magneticum (strain ATCC 700264 / AMB-1) (Magnetospirillum magneticum)).